Reading from the N-terminus, the 283-residue chain is Elongation factor Ts (283 aa).

Residues 80–83 (TDFV) are involved in Mg(2+) ion dislocation from EF-Tu.

The protein belongs to the EF-Ts family.

Its subcellular location is the cytoplasm. Its function is as follows. Associates with the EF-Tu.GDP complex and induces the exchange of GDP to GTP. It remains bound to the aminoacyl-tRNA.EF-Tu.GTP complex up to the GTP hydrolysis stage on the ribosome. In Erwinia tasmaniensis (strain DSM 17950 / CFBP 7177 / CIP 109463 / NCPPB 4357 / Et1/99), this protein is Elongation factor Ts.